A 342-amino-acid polypeptide reads, in one-letter code: Isopentenyl-diphosphate delta-isomerase (342 aa).

Position 11–12 (11–12 (RK)) interacts with substrate. FMN-binding positions include Ser-68, 69–71 (SMT), Ser-99, and Asn-127. 99–101 (SMR) lines the substrate pocket. Gln-162 serves as a coordination point for substrate. Glu-163 lines the Mg(2+) pocket. FMN is bound by residues Lys-194, Thr-224, 274–276 (GLK), and 295–296 (AG).

This sequence belongs to the IPP isomerase type 2 family. In terms of assembly, homooctamer. Dimer of tetramers. FMN serves as cofactor. The cofactor is NADPH. It depends on Mg(2+) as a cofactor.

It is found in the cytoplasm. The catalysed reaction is isopentenyl diphosphate = dimethylallyl diphosphate. Its function is as follows. Involved in the biosynthesis of isoprenoids. Catalyzes the 1,3-allylic rearrangement of the homoallylic substrate isopentenyl (IPP) to its allylic isomer, dimethylallyl diphosphate (DMAPP). The chain is Isopentenyl-diphosphate delta-isomerase from Rickettsia rickettsii (strain Iowa).